Here is a 120-residue protein sequence, read N- to C-terminus: Ribosome-binding factor A (120 aa).

It belongs to the RbfA family. In terms of assembly, monomer. Binds 30S ribosomal subunits, but not 50S ribosomal subunits or 70S ribosomes.

It is found in the cytoplasm. Its function is as follows. One of several proteins that assist in the late maturation steps of the functional core of the 30S ribosomal subunit. Associates with free 30S ribosomal subunits (but not with 30S subunits that are part of 70S ribosomes or polysomes). Required for efficient processing of 16S rRNA. May interact with the 5'-terminal helix region of 16S rRNA. The chain is Ribosome-binding factor A from Chlorobaculum parvum (strain DSM 263 / NCIMB 8327) (Chlorobium vibrioforme subsp. thiosulfatophilum).